Reading from the N-terminus, the 102-residue chain is Small ribosomal subunit protein uS10 (102 aa).

This sequence belongs to the universal ribosomal protein uS10 family. As to quaternary structure, part of the 30S ribosomal subunit.

Functionally, involved in the binding of tRNA to the ribosomes. This is Small ribosomal subunit protein uS10 from Saccharolobus islandicus (strain M.16.4 / Kamchatka #3) (Sulfolobus islandicus).